We begin with the raw amino-acid sequence, 204 residues long: UPF0637 protein SA0957 (204 aa).

This sequence belongs to the UPF0637 family.

In Staphylococcus aureus (strain N315), this protein is UPF0637 protein SA0957.